The following is a 372-amino-acid chain: Cuticle collagen dpy-10 (372 aa).

The first 45 residues, 1–45 (MKNNAKEDYRTFSLTTNYSRQMIYRCVTGLQIGFSLFSFIIVCVA), serve as a signal peptide directing secretion. 3 triple-helical region regions span residues 144–173 (GPPG…PGTT), 195–251 (GPPG…KGPT), and 259–324 (GPPG…PGVC). The tract at residues 144–372 (GPPGPRGSSG…RAGYQGYGRK (229 aa)) is disordered. Pro residues predominate over residues 185 to 196 (EPPPCRPCPKGP). The segment covering 197–208 (PGIKGWPGFPGD) has biased composition (low complexity). 2 stretches are compositionally biased toward gly residues: residues 237–246 (GYRGGPGAPG) and 283–292 (GLTGGQGERG). Residues 293–303 (WPGVSGESGEP) show a composition bias toward low complexity. Positions 353–363 (GYGGSRGGGDR) are enriched in gly residues.

It belongs to the cuticular collagen family. In terms of assembly, collagen polypeptide chains are complexed within the cuticle by disulfide bonds and other types of covalent cross-links.

In terms of biological role, nematode cuticles are composed largely of collagen-like proteins. The cuticle functions both as an exoskeleton and as a barrier to protect the worm from its environment. In Caenorhabditis elegans, this protein is Cuticle collagen dpy-10 (dpy-10).